The primary structure comprises 157 residues: MRIGIGIDVHQFSEDRKLIVGGVEVPSPVGLLGHSDADVLLHAISDALLGAAALGDIGKHFPDTSPDYKDADSMELLKHVGKLLEQEGYKPVNIDTMLLLEKPKIAPYIEQMRRNIASCLDMDMNDVSVKATTNEKLGYVGRQEGACAHAVCLIEKK.

A divalent metal cation is bound by residues Asp8 and His10. 4-CDP-2-C-methyl-D-erythritol 2-phosphate contacts are provided by residues 8–10 and 34–35; these read DVH and HS. His42 is an a divalent metal cation binding site. Residues 56–58, 132–135, and Arg142 each bind 4-CDP-2-C-methyl-D-erythritol 2-phosphate; these read DIG and TTNE.

This sequence belongs to the IspF family. In terms of assembly, homotrimer. It depends on a divalent metal cation as a cofactor.

The enzyme catalyses 4-CDP-2-C-methyl-D-erythritol 2-phosphate = 2-C-methyl-D-erythritol 2,4-cyclic diphosphate + CMP. It functions in the pathway isoprenoid biosynthesis; isopentenyl diphosphate biosynthesis via DXP pathway; isopentenyl diphosphate from 1-deoxy-D-xylulose 5-phosphate: step 4/6. Involved in the biosynthesis of isopentenyl diphosphate (IPP) and dimethylallyl diphosphate (DMAPP), two major building blocks of isoprenoid compounds. Catalyzes the conversion of 4-diphosphocytidyl-2-C-methyl-D-erythritol 2-phosphate (CDP-ME2P) to 2-C-methyl-D-erythritol 2,4-cyclodiphosphate (ME-CPP) with a corresponding release of cytidine 5-monophosphate (CMP). In Chlorobaculum parvum (strain DSM 263 / NCIMB 8327) (Chlorobium vibrioforme subsp. thiosulfatophilum), this protein is 2-C-methyl-D-erythritol 2,4-cyclodiphosphate synthase.